A 325-amino-acid chain; its full sequence is UDP-N-acetylglucosamine transporter ROCK1 (325 aa).

Residues 1-13 lie on the Cytoplasmic side of the membrane; that stretch reads MATANGAKSPSSM. Residues 14 to 34 form a helical membrane-spanning segment; the sequence is GPKVLFYSILLTLQYGAQPLI. At 35–42 the chain is on the lumenal side; that stretch reads SKRCIRKD. A helical transmembrane segment spans residues 43–63; that stretch reads VIVTSSVLTCEIVKVICALIL. Residues 64–109 are Cytoplasmic-facing; sequence MARNGSLKGLAKEWTLMGSLTASGLPAAIYALQNSLLQISYRSLDS. The helical transmembrane segment at 110–130 threads the bilayer; that stretch reads LTFSILNQTKIFFTAFFTFII. The Lumenal segment spans residues 131 to 135; that stretch reads LRQKQ. Residues 136–156 form a helical membrane-spanning segment; sequence SILQIGALCLLIMAAVLLSVG. Over 157–171 the chain is Cytoplasmic; the sequence is EGSNKDSSGINADQK. Residues 172–192 form a helical membrane-spanning segment; it reads LFYGIIPVLAASVLSGLASSL. Residues 193 to 203 are Lumenal-facing; it reads CQWASQVKKHS. A helical membrane pass occupies residues 204–224; sequence SYLMTVEMSIVGSLCLLVSTL. The Cytoplasmic portion of the chain corresponds to 225-241; that stretch reads KSPDGEAIKKYGFFHGW. A helical membrane pass occupies residues 242-262; the sequence is TALTLVPVISNALGGILVGLV. Topologically, residues 263–270 are lumenal; the sequence is TSHAGGVR. The chain crosses the membrane as a helical span at residues 271–291; sequence KGFVIVSALLVTALLQFAFEG. Residues 292–325 are Cytoplasmic-facing; the sequence is KPPSSYCLVALPLVMSSISMYQKYPYIDKKKKKV.

It belongs to the nucleotide-sugar transporter family. CMP-Sialate:CMP antiporter (TC 2.A.7.12) subfamily. As to expression, expressed in roots, cotyledons, leaves, stems, flowers and siliques.

The protein localises to the endoplasmic reticulum membrane. Its function is as follows. Mediates the transport of UDP-linked acetylated hexosamines across the endoplasmic reticulum (ER) membrane. Facilitates UDP-N-acetylglucosamine (UDP-GlcNAc) and UDP-N-acetylgalactosamine (UDP-GalNAc) transport. Regulates the cytokinin signal in meristematic cells through modulating activity of cytokinin oxidases/dehydrogenases. Part of the ER quality control system, which determines the fate of aberrant proteins in the secretory pathway. The protein is UDP-N-acetylglucosamine transporter ROCK1 of Arabidopsis thaliana (Mouse-ear cress).